We begin with the raw amino-acid sequence, 198 residues long: KHSLPDLPYDYGALEPHINAQIMQLHHSKHHAAYVNNLNVTEEKYQEALAKGDVTAQIALQPALKFNGGGHINHSIFWTNLSPNGGGEPKGELLEAIKRDFGSFDKFKEKLTATSVGVQGSGWGWLGFNKERGHLQIAACPNQDPLQGTTGLIPLLGIDVWEHAYYLQYKNVRPDYLKAIWNVINWENVTERYMACKK.

His-26 lines the Mn(2+) pocket. Tyr-34 is modified (3'-nitrotyrosine). Residues Lys-44 and Lys-51 each carry the N6-acetyllysine; alternate modification. Residues Lys-44 and Lys-51 each carry the N6-succinyllysine; alternate modification. His-74 contacts Mn(2+). N6-acetyllysine is present on Lys-90. Lys-98 and Lys-106 each carry N6-acetyllysine; alternate. Residues Lys-98 and Lys-106 each carry the N6-succinyllysine; alternate modification. Residues Asp-159 and His-163 each coordinate Mn(2+). Position 178 is an N6-acetyllysine (Lys-178).

This sequence belongs to the iron/manganese superoxide dismutase family. In terms of assembly, homotetramer. The cofactor is Mn(2+). Post-translationally, nitrated under oxidative stress. Nitration coupled with oxidation inhibits the catalytic activity. In terms of processing, acetylation at Lys-98 decreases enzymatic activity. Deacetylated by SIRT3 upon exposure to ionizing radiations or after long fasting. Polyubiquitinated; leading to proteasomal degradation. Deubiquitinated by USP36 which increases protein stability.

It is found in the mitochondrion matrix. It carries out the reaction 2 superoxide + 2 H(+) = H2O2 + O2. Functionally, destroys superoxide anion radicals which are normally produced within the cells and which are toxic to biological systems. This chain is Superoxide dismutase [Mn], mitochondrial (SOD2), found in Hylobates lar (Lar gibbon).